A 422-amino-acid polypeptide reads, in one-letter code: Glutamate-1-semialdehyde 2,1-aminomutase (422 aa).

N6-(pyridoxal phosphate)lysine is present on Lys258.

Belongs to the class-III pyridoxal-phosphate-dependent aminotransferase family. HemL subfamily. In terms of assembly, homodimer. Pyridoxal 5'-phosphate is required as a cofactor.

The protein resides in the cytoplasm. It carries out the reaction (S)-4-amino-5-oxopentanoate = 5-aminolevulinate. It participates in porphyrin-containing compound metabolism; protoporphyrin-IX biosynthesis; 5-aminolevulinate from L-glutamyl-tRNA(Glu): step 2/2. This chain is Glutamate-1-semialdehyde 2,1-aminomutase, found in Chlamydia trachomatis serovar L2 (strain ATCC VR-902B / DSM 19102 / 434/Bu).